A 545-amino-acid polypeptide reads, in one-letter code: MEINQPNLLEASKSCYSKITFFLLVISFAALVSTGFSSPELSLHHKICDQSVNKESCLAMISEVTGLNMADHRNLLKSFLEKTTPRIQKAFETANDASRRINNPQERTALLDCAELMDLSKERVVDSISILFHQNLTTRSHEDLHVWLSGVLTNHVTCLDGLEEGSTDYIKTLMESHLNELILRARTSLAIFVTLFPAKSNVIEPVTGNFPTWVTAGDRRLLQTLGKDIEPDIVVAKDGSGDYETLNEAVAAIPDNSKKRVIVLVRTGIYEENVDFGYQKKNVMLVGEGMDYTIITGSRNVVDGSTTFDSATVAAVGDGFIAQDICFQNTAGPEKYQAVALRIGADETVINRCRIDAYQDTLYPHNYRQFYRDRNITGTVDFIFGNAAVVFQNCNLIPRKQMKGQENTITAQGRTDPNQNTGTSIQNCEIFASADLEPVEDTFKSYLGRPWKEYSRTVVMESYISDVIDPAGWLEWDRDFALKTLFYGEYRNGGPGSGTSERVKWPGYHVITSPEVAEQFTVAELIQGGSWLGSTGVDYTAGLYA.

Positions 1-37 (MEINQPNLLEASKSCYSKITFFLLVISFAALVSTGFS) are cleaved as a signal peptide. The interval 38 to 191 (SPELSLHHKI…ILRARTSLAI (154 aa)) is pectinesterase inhibitor. A propeptide spanning residues 38–228 (SPELSLHHKI…RRLLQTLGKD (191 aa)) is cleaved from the precursor. An N-linked (GlcNAc...) asparagine glycan is attached at Asn135. The tract at residues 232 to 530 (DIVVAKDGSG…TVAELIQGGS (299 aa)) is pectinesterase. Residues Thr307 and Gln337 each contribute to the substrate site. Residues Cys326 and Cys353 are joined by a disulfide bond. Asp360 acts as the Proton donor; for pectinesterase activity in catalysis. N-linked (GlcNAc...) (complex) asparagine glycosylation is present at Asn375. Residue Asp381 is the Nucleophile; for pectinesterase activity of the active site. Cys394 and Cys428 are disulfide-bonded. Residues Arg449 and Trp451 each contribute to the substrate site.

This sequence in the N-terminal section; belongs to the PMEI family. The protein in the C-terminal section; belongs to the pectinesterase family. Post-translationally, N-glycosylated.

The protein resides in the secreted. The protein localises to the cell wall. It carries out the reaction [(1-&gt;4)-alpha-D-galacturonosyl methyl ester](n) + n H2O = [(1-&gt;4)-alpha-D-galacturonosyl](n) + n methanol + n H(+). It functions in the pathway glycan metabolism; pectin degradation; 2-dehydro-3-deoxy-D-gluconate from pectin: step 1/5. Acts in the modification of cell walls via demethylesterification of cell wall pectin. This Ficus pumila var. awkeotsang (Jelly fig) protein is Pectinesterase/pectinesterase inhibitor.